We begin with the raw amino-acid sequence, 119 residues long: Large ribosomal subunit protein uL22 (119 aa).

It belongs to the universal ribosomal protein uL22 family. As to quaternary structure, part of the 50S ribosomal subunit.

In terms of biological role, this protein binds specifically to 23S rRNA; its binding is stimulated by other ribosomal proteins, e.g. L4, L17, and L20. It is important during the early stages of 50S assembly. It makes multiple contacts with different domains of the 23S rRNA in the assembled 50S subunit and ribosome. Its function is as follows. The globular domain of the protein is located near the polypeptide exit tunnel on the outside of the subunit, while an extended beta-hairpin is found that lines the wall of the exit tunnel in the center of the 70S ribosome. This Bifidobacterium adolescentis (strain ATCC 15703 / DSM 20083 / NCTC 11814 / E194a) protein is Large ribosomal subunit protein uL22.